The sequence spans 149 residues: MEVILLEKIGKIGNLGEVVKVRSGYGRNFLIPQGKALPATSENKSVFEAQRADYEARQAEILADAETLAAKVDEVSVVMKRPAGAMDKLFGSVTSADIAVFYKDLGLNIPRNIIDVLTPIRTLGEHQVRVRLHPDVVRVISIQVERAVK.

Belongs to the bacterial ribosomal protein bL9 family.

In terms of biological role, binds to the 23S rRNA. The polypeptide is Large ribosomal subunit protein bL9 (Magnetococcus marinus (strain ATCC BAA-1437 / JCM 17883 / MC-1)).